We begin with the raw amino-acid sequence, 480 residues long: tRNA-2-methylthio-N(6)-dimethylallyladenosine synthase (480 aa).

In terms of domain architecture, MTTase N-terminal spans 29–145 (GSFWIQTFGC…LEALLTQVDN (117 aa)). [4Fe-4S] cluster is bound by residues Cys-38, Cys-74, Cys-108, Cys-180, Cys-184, and Cys-187. The Radical SAM core domain maps to 166–403 (RDSTICAWVN…NALVERIALQ (238 aa)). One can recognise a TRAM domain in the interval 406–474 (SRYSGKVEQV…AFSLSGTPCE (69 aa)).

Belongs to the methylthiotransferase family. MiaB subfamily. As to quaternary structure, monomer. It depends on [4Fe-4S] cluster as a cofactor.

It is found in the cytoplasm. It catalyses the reaction N(6)-dimethylallyladenosine(37) in tRNA + (sulfur carrier)-SH + AH2 + 2 S-adenosyl-L-methionine = 2-methylsulfanyl-N(6)-dimethylallyladenosine(37) in tRNA + (sulfur carrier)-H + 5'-deoxyadenosine + L-methionine + A + S-adenosyl-L-homocysteine + 2 H(+). Functionally, catalyzes the methylthiolation of N6-(dimethylallyl)adenosine (i(6)A), leading to the formation of 2-methylthio-N6-(dimethylallyl)adenosine (ms(2)i(6)A) at position 37 in tRNAs that read codons beginning with uridine. The chain is tRNA-2-methylthio-N(6)-dimethylallyladenosine synthase from Prochlorococcus marinus (strain MIT 9313).